Consider the following 220-residue polypeptide: Small ribosomal subunit protein uS3 (220 aa).

The region spanning 38-106 is the KH type-2 domain; sequence IREFVKKSLN…EVFLNIVEVR (69 aa).

Belongs to the universal ribosomal protein uS3 family. Part of the 30S ribosomal subunit. Forms a tight complex with proteins S10 and S14.

Binds the lower part of the 30S subunit head. Binds mRNA in the 70S ribosome, positioning it for translation. This is Small ribosomal subunit protein uS3 from Myxococcus xanthus (strain DK1622).